Here is a 1392-residue protein sequence, read N- to C-terminus: DNA-directed RNA polymerase subunit beta (1392 aa).

This sequence belongs to the RNA polymerase beta chain family. In terms of assembly, the RNAP catalytic core consists of 2 alpha, 1 beta, 1 beta' and 1 omega subunit. When a sigma factor is associated with the core the holoenzyme is formed, which can initiate transcription.

It carries out the reaction RNA(n) + a ribonucleoside 5'-triphosphate = RNA(n+1) + diphosphate. DNA-dependent RNA polymerase catalyzes the transcription of DNA into RNA using the four ribonucleoside triphosphates as substrates. The polypeptide is DNA-directed RNA polymerase subunit beta (Neisseria meningitidis serogroup A / serotype 4A (strain DSM 15465 / Z2491)).